Consider the following 302-residue polypeptide: Calpain-1 catalytic subunit (302 aa).

The tract at residues 1–114 (RESGCSFVLA…KRAGTQELDD (114 aa)) is domain III. Residues 115–130 (QIQANLPDEQVLSAEE) are linker. A domain IV region spans residues 131 to 301 (IDENFKALFR…LFKWLQLTMF (171 aa)). EF-hand domains are found at residues 173–206 (FSME…NRIR), 203–238 (NRIR…AGFK), and 268–302 (VRLE…TMFA). Ca(2+) contacts are provided by D186, D188, N190, K192, E197, D216, D218, S220, S222, and E227.

It belongs to the peptidase C2 family. In terms of assembly, forms a heterodimer with a small (regulatory) subunit CAPNS1. The cofactor is Ca(2+). In terms of processing, the N-terminus is blocked. Post-translationally, undergoes calcium-induced successive autoproteolytic cleavages that generate a membrane-bound 78 kDa active form and an intracellular 75 kDa active form. Calpastatin reduces with high efficiency the transition from 78 kDa to 75 kDa calpain forms. As to expression, ubiquitous.

It localises to the cytoplasm. It is found in the cell membrane. The enzyme catalyses Broad endopeptidase specificity.. Activated by micromolar concentrations of calcium and inhibited by calpastatin. Its function is as follows. Calcium-regulated non-lysosomal thiol-protease which catalyzes limited proteolysis of substrates involved in cytoskeletal remodeling and signal transduction. Proteolytically cleaves CTBP1. Cleaves and activates caspase-7 (CASP7). The protein is Calpain-1 catalytic subunit of Oryctolagus cuniculus (Rabbit).